We begin with the raw amino-acid sequence, 722 residues long: Portal protein (722 aa).

Residues 402–426 (ASIDTSQPGFGQSNRAQSSTTEETR) form a disordered region. The span at 404–422 (IDTSQPGFGQSNRAQSSTT) shows a compositional bias: polar residues. Residues 448 to 469 (LEGYVNKLFNTVEGLKAANKDL) are putative leucine zipper motif. Positions 658–683 (QREAEDLPDGHHGRRNDFHSPSSRRE) are enriched in basic and acidic residues. The segment at 658-722 (QREAEDLPDG…GEDDDGSQRD (65 aa)) is disordered. The span at 684 to 696 (RYSRRSGYKRHRW) shows a compositional bias: basic residues. A compositionally biased stretch (basic and acidic residues) spans 697–706 (NRESRRDYRR). Acidic residues predominate over residues 713-722 (GEDDDGSQRD).

It belongs to the herpesviridae portal protein family. In terms of assembly, homododecamerizes. Interacts with terminase subunits TRM1 and TRM3.

The protein localises to the virion. Its subcellular location is the host nucleus. In terms of biological role, forms a portal in the viral capsid through which viral DNA is translocated during DNA packaging. Assembles as a dodecamer at a single fivefold axe of the T=16 icosahedric capsid. Binds to the molecular motor that translocates the viral DNA, termed terminase. The polypeptide is Portal protein (MDV018) (Gallid herpesvirus 2 (strain Chicken/Md5/ATCC VR-987) (GaHV-2)).